The sequence spans 219 residues: UPF0126 membrane protein SCO5481 (219 aa).

6 helical membrane-spanning segments follow: residues 10–30 (VQHTLDLVGIFVFAISGALLA), 34–54 (NFDVFGIAVLAEVTALGGGLF), 66–86 (AFTDLGYFLTPLLATLLVFFL), 93–113 (LQTGVNIFDAAGLGLFCVAGT), 120–140 (GLGLTASACLGLTTAVGGGVL), and 158–178 (LYAVPAIVGSAMVALCIRYEA).

It belongs to the UPF0126 family.

Its subcellular location is the cell membrane. The polypeptide is UPF0126 membrane protein SCO5481 (Streptomyces coelicolor (strain ATCC BAA-471 / A3(2) / M145)).